We begin with the raw amino-acid sequence, 327 residues long: Sphingomyelinase D (327 aa).

A signal peptide spans 1–23 (MQPLTRTICALFCLLLTLPLTFG). Residue His-52 is part of the active site. 3 residues coordinate Mg(2+): Glu-72, Asp-74, and Asp-117. The SMD-tail signature appears at 320–327 (VTGADKLW).

Belongs to the sphingomyelinase D/phospholipase D family. It depends on Mg(2+) as a cofactor.

Its subcellular location is the secreted. The catalysed reaction is a sphingomyelin + H2O = an N-acylsphing-4-enine 1-phosphate + choline + H(+). In terms of biological role, catalyzes the hydrolysis of sphingomyelin. Sphingomyelinases D are produced by some spider in their venoms, but also by arthropods such as ticks, or pathogenic bacteria and fungi. They might play a role in pathogenicity through different mechanisms, such as membrane destabilization and host cell penetration, but also pulmonary inflammation and cutaneous lesions. This Paracoccidioides brasiliensis (strain Pb03) protein is Sphingomyelinase D.